We begin with the raw amino-acid sequence, 576 residues long: Non-neuronal cytoplasmic intermediate filament protein (576 aa).

Positions 1–51 (MTSKISTTYEEEGRQSKIQPRAFVITRSGPSSKSSSFSARQSYASSRQSIT) are disordered. The head stretch occupies residues 2 to 75 (TSKISTTYEE…FRGTREKEKR (74 aa)). A compositionally biased stretch (low complexity) spans 28 to 49 (SGPSSKSSSFSARQSYASSRQS). Positions 73 to 425 (EKREMQNLNE…KLLEGEESRV (353 aa)) constitute an IF rod domain. Residues 76–108 (EMQNLNERLASYIEKVHFLDAQVKKLEAENEAL) are coil 1A. A linker 1 region spans residues 109–122 (RNRKSESLQPIRDA). The segment at 123 to 260 (YENELAQARK…DLLDQLELLK (138 aa)) is coil 1B. Residues 261 to 278 (PEPIQIKGMDYAEFWKSE) form a linker 2 region. The interval 279–425 (LSKCVREIQS…KLLEGEESRV (147 aa)) is coil 2. Residues 426 to 576 (GLRSLVEQAI…KATLIAKFSG (151 aa)) form a tail region. Positions 456–574 (GSMTIQRSSK…NEKATLIAKF (119 aa)) constitute an LTD domain.

It belongs to the intermediate filament family. In terms of assembly, can form homopolymers.

It localises to the cytoplasm. The chain is Non-neuronal cytoplasmic intermediate filament protein from Cornu aspersum (Brown garden snail).